A 190-amino-acid polypeptide reads, in one-letter code: Bifunctional protein PyrR (190 aa).

Residues 107 to 119 (IILVDDVLYSGRT) carry the PRPP-binding motif.

It belongs to the purine/pyrimidine phosphoribosyltransferase family. PyrR subfamily.

It carries out the reaction UMP + diphosphate = 5-phospho-alpha-D-ribose 1-diphosphate + uracil. Its function is as follows. Regulates the transcription of the pyrimidine nucleotide (pyr) operon in response to exogenous pyrimidines. In terms of biological role, also displays a weak uracil phosphoribosyltransferase activity which is not physiologically significant. The polypeptide is Bifunctional protein PyrR (Corynebacterium diphtheriae (strain ATCC 700971 / NCTC 13129 / Biotype gravis)).